We begin with the raw amino-acid sequence, 406 residues long: Formate-dependent phosphoribosylglycinamide formyltransferase (406 aa).

Residues 28–29 (EL) and Glu-88 contribute to the N(1)-(5-phospho-beta-D-ribosyl)glycinamide site. ATP contacts are provided by residues Arg-121, Lys-162, 167 to 172 (SSGKGQ), 202 to 205 (EGFI), and Glu-210. In terms of domain architecture, ATP-grasp spans 126 to 320 (RLAAEELGCA…EFELHAKAIL (195 aa)). Mg(2+) contacts are provided by Glu-279 and Glu-291. Residues Asp-298, Lys-367, and 374–375 (RR) each bind N(1)-(5-phospho-beta-D-ribosyl)glycinamide.

It belongs to the PurK/PurT family. As to quaternary structure, homodimer.

It catalyses the reaction N(1)-(5-phospho-beta-D-ribosyl)glycinamide + formate + ATP = N(2)-formyl-N(1)-(5-phospho-beta-D-ribosyl)glycinamide + ADP + phosphate + H(+). It participates in purine metabolism; IMP biosynthesis via de novo pathway; N(2)-formyl-N(1)-(5-phospho-D-ribosyl)glycinamide from N(1)-(5-phospho-D-ribosyl)glycinamide (formate route): step 1/1. Functionally, involved in the de novo purine biosynthesis. Catalyzes the transfer of formate to 5-phospho-ribosyl-glycinamide (GAR), producing 5-phospho-ribosyl-N-formylglycinamide (FGAR). Formate is provided by PurU via hydrolysis of 10-formyl-tetrahydrofolate. The polypeptide is Formate-dependent phosphoribosylglycinamide formyltransferase (Janthinobacterium sp. (strain Marseille) (Minibacterium massiliensis)).